A 198-amino-acid chain; its full sequence is Probable chorismate pyruvate-lyase (198 aa).

Substrate is bound by residues arginine 73, leucine 111, and glutamate 172.

Belongs to the UbiC family.

It localises to the cytoplasm. The catalysed reaction is chorismate = 4-hydroxybenzoate + pyruvate. The protein operates within cofactor biosynthesis; ubiquinone biosynthesis. In terms of biological role, removes the pyruvyl group from chorismate, with concomitant aromatization of the ring, to provide 4-hydroxybenzoate (4HB) for the ubiquinone pathway. This is Probable chorismate pyruvate-lyase from Burkholderia lata (strain ATCC 17760 / DSM 23089 / LMG 22485 / NCIMB 9086 / R18194 / 383).